The following is a 468-amino-acid chain: COBRA-like protein 5 (468 aa).

A signal peptide spans 1–22 (MELHRCSLLALLLAVTCSVAVA). 4 N-linked (GlcNAc...) asparagine glycosylation sites follow: Asn31, Asn156, Asn164, and Asn228. The segment at 251–278 (GGGKNARAGDGRSRRNSGGGGGHSGGTE) is disordered. N-linked (GlcNAc...) asparagine glycans are attached at residues Asn340, Asn355, and Asn374. A lipid anchor (GPI-anchor amidated asparagine) is attached at Asn443. A propeptide spans 444–468 (SAPIGPPRSVAAAASAILVVLLLVA) (removed in mature form).

This sequence belongs to the COBRA family. As to expression, expressed mainly in developing sclerenchyma cells and in vascular bundles.

The protein localises to the cell membrane. Involved in determining the orientation of cell expansion, probably by playing an important role in cellulose deposition. May act by recruiting cellulose synthesizing complexes to discrete positions on the cell surface. This chain is COBRA-like protein 5 (BC1), found in Oryza sativa subsp. indica (Rice).